Consider the following 73-residue polypeptide: NAD(P)H-quinone oxidoreductase subunit L (73 aa).

2 helical membrane-spanning segments follow: residues 6-26 (SLIGLTYAGLAVLYLLVLPLL) and 44-64 (VLMFFLVLFFFPGMVLLAPFM).

The protein belongs to the complex I NdhL subunit family. As to quaternary structure, NDH-1 can be composed of about 15 different subunits; different subcomplexes with different compositions have been identified which probably have different functions.

The protein resides in the cellular thylakoid membrane. The catalysed reaction is a plastoquinone + NADH + (n+1) H(+)(in) = a plastoquinol + NAD(+) + n H(+)(out). It catalyses the reaction a plastoquinone + NADPH + (n+1) H(+)(in) = a plastoquinol + NADP(+) + n H(+)(out). NDH-1 shuttles electrons from an unknown electron donor, via FMN and iron-sulfur (Fe-S) centers, to quinones in the respiratory and/or the photosynthetic chain. The immediate electron acceptor for the enzyme in this species is believed to be plastoquinone. Couples the redox reaction to proton translocation, and thus conserves the redox energy in a proton gradient. Cyanobacterial NDH-1 also plays a role in inorganic carbon-concentration. This chain is NAD(P)H-quinone oxidoreductase subunit L, found in Synechococcus sp. (strain JA-2-3B'a(2-13)) (Cyanobacteria bacterium Yellowstone B-Prime).